The sequence spans 3672 residues: Laminin-like protein epi-1 (3672 aa).

The N-terminal stretch at M1 to S27 is a signal peptide. Residues Q28 to R297 form the Laminin N-terminal domain. Residues N121, N140, and N249 are each glycosylated (N-linked (GlcNAc...) asparagine). Disulfide bonds link C298–C307, C300–C320, C322–C331, C334–C354, C357–C366, C359–C391, C394–C403, C406–C424, C427–C438, C429–C445, C447–C456, C459–C469, C472–C484, C474–C491, C493–C502, C505–C516, C519–C531, C521–C538, C540–C549, C552–C561, C564–C576, C566–C583, C585–C594, C597–C607, C610–C622, C612–C629, C631–C640, C643–C653, C656–C668, C658–C674, C676–C685, C688–C698, C701–C715, C703–C724, C726–C735, C738–C753, C756–C770, C758–C777, C779–C788, C791–C806, C809–C821, C811–C828, and C830–C839. Laminin EGF-like domains are found at residues C298–A356, C357–V426, C427–P471, C472–E518, C519–F563, C564–A609, C610–G655, C656–E700, C701–S755, and C756–S808. The N-linked (GlcNAc...) asparagine glycan is linked to N351. N-linked (GlcNAc...) asparagine glycosylation occurs at N477. Residues N511 and N530 are each glycosylated (N-linked (GlcNAc...) asparagine). N-linked (GlcNAc...) asparagine glycosylation occurs at N634. An N-linked (GlcNAc...) asparagine glycan is attached at N761. Residues C809–C839 enclose the Laminin EGF-like 11; truncated domain. N-linked (GlcNAc...) asparagine glycans are attached at residues N1014 and N1341. Intrachain disulfides connect C1415–C1427, C1417–C1434, C1436–C1445, C1448–C1458, C1461–C1469, C1463–C1476, C1478–C1487, C1490–C1503, C1506–C1520, C1508–C1527, C1529–C1538, C1541–C1551, C1554–C1566, C1556–C1573, C1575–C1584, and C1587–C1602. Laminin EGF-like domains follow at residues C1415–K1460, C1461–K1505, C1506–G1553, and C1554–N1604. The 10-residue stretch at C1605–C1614 folds into the Laminin EGF-like 16; first part domain. The Laminin IV type A domain maps to R1615–Q1796. 2 N-linked (GlcNAc...) asparagine glycosylation sites follow: N1705 and N1756. The 33-residue stretch at C1797–P1829 folds into the Laminin EGF-like 16; second part domain. 24 cysteine pairs are disulfide-bonded: C1830/C1839, C1832/C1846, C1849/C1858, C1861/C1877, C1880/C1894, C1882/C1905, C1907/C1916, C1919/C1934, C1937/C1951, C1939/C1958, C1961/C1970, C1973/C1987, C1990/C2000, C1992/C2007, C2009/C2018, C2021/C2031, C2037/C2048, C2039/C2055, C2057/C2066, C2069/C2081, C2084/C2096, C2086/C2103, C2105/C2114, and C2117/C2129. 6 Laminin EGF-like domains span residues C1830 to A1879, C1880 to P1936, C1937 to S1989, C1990 to G2036, C2037 to K2083, and C2084 to R2131. Residue N1868 is glycosylated (N-linked (GlcNAc...) asparagine). N1944 is a glycosylation site (N-linked (GlcNAc...) asparagine). A glycan (N-linked (GlcNAc...) asparagine) is linked at N1986. N2002 carries an N-linked (GlcNAc...) asparagine glycan. 8 N-linked (GlcNAc...) asparagine glycosylation sites follow: N2159, N2207, N2231, N2235, N2401, N2421, N2487, and N2821. Laminin G-like domains are found at residues G2693–A2884, E2896–C3066, and R3072–C3235. C3040 and C3066 are oxidised to a cystine. The N-linked (GlcNAc...) asparagine glycan is linked to N3087. Cysteines 3209 and 3235 form a disulfide. The disordered stretch occupies residues S3236 to H3294. An N-linked (GlcNAc...) asparagine glycan is attached at N3242. Residues T3271–E3280 are compositionally biased toward low complexity. 2 Laminin G-like domains span residues G3310–C3482 and P3488–C3669. A disulfide bond links C3460 and C3482. A glycan (N-linked (GlcNAc...) asparagine) is linked at N3541. A disulfide bond links C3633 and C3669.

Laminin is a complex glycoprotein, consisting of three different polypeptide chains (alpha, beta, gamma), which are bound to each other by disulfide bonds into a cross-shaped molecule comprising one long and three short arms with globules at each end.

It localises to the secreted. It is found in the extracellular space. The protein resides in the extracellular matrix. The protein localises to the basement membrane. Functionally, binding to cells via a high affinity receptor, laminin is thought to mediate the attachment, migration and organization of cells into tissues during embryonic development by interacting with other extracellular matrix components. Required to assemble a stable basement membrane and for organizing receptor complexes and cytoskeletal components to the proper cell surfaces. During embryogenesis, does not require the presence of collagen type IV in order to associate with cell surfaces, prior to assembly of the prototypical basement membrane. During the formation of neuromuscular junctions at the larval stage, negatively regulates membrane protrusion from body wall muscles, probably downstream of the integrin complex formed by pat-2 and pat-3. Probably plays a distinct role from the related laminin subunit alpha lam-3. This chain is Laminin-like protein epi-1 (epi-1), found in Caenorhabditis elegans.